Here is a 205-residue protein sequence, read N- to C-terminus: Holliday junction branch migration complex subunit RuvA (205 aa).

Positions 1–64 are domain I; sequence MIGKLKGLID…EDQIKLFGFR (64 aa). The segment at 65 to 143 is domain II; sequence SDLEREWFRL…GFASVDPAVA (79 aa). Positions 144–153 are flexible linker; the sequence is HLSGAIEERS. The segment at 153–205 is domain III; it reads SAPRPVADAISALVNLGYGQPQAAAAIAAAARSAGDAAQTAQLIKLGLKELSK.

The protein belongs to the RuvA family. As to quaternary structure, homotetramer. Forms an RuvA(8)-RuvB(12)-Holliday junction (HJ) complex. HJ DNA is sandwiched between 2 RuvA tetramers; dsDNA enters through RuvA and exits via RuvB. An RuvB hexamer assembles on each DNA strand where it exits the tetramer. Each RuvB hexamer is contacted by two RuvA subunits (via domain III) on 2 adjacent RuvB subunits; this complex drives branch migration. In the full resolvosome a probable DNA-RuvA(4)-RuvB(12)-RuvC(2) complex forms which resolves the HJ.

The protein resides in the cytoplasm. In terms of biological role, the RuvA-RuvB-RuvC complex processes Holliday junction (HJ) DNA during genetic recombination and DNA repair, while the RuvA-RuvB complex plays an important role in the rescue of blocked DNA replication forks via replication fork reversal (RFR). RuvA specifically binds to HJ cruciform DNA, conferring on it an open structure. The RuvB hexamer acts as an ATP-dependent pump, pulling dsDNA into and through the RuvAB complex. HJ branch migration allows RuvC to scan DNA until it finds its consensus sequence, where it cleaves and resolves the cruciform DNA. The chain is Holliday junction branch migration complex subunit RuvA from Rhodopseudomonas palustris (strain BisA53).